Here is a 207-residue protein sequence, read N- to C-terminus: Large ribosomal subunit protein bL25 (207 aa).

The interval 182–207 is disordered; that stretch reads QDLGDESVQEEQAAESAEGESEGSED.

Belongs to the bacterial ribosomal protein bL25 family. CTC subfamily. In terms of assembly, part of the 50S ribosomal subunit; part of the 5S rRNA/L5/L18/L25 subcomplex. Contacts the 5S rRNA. Binds to the 5S rRNA independently of L5 and L18.

Functionally, this is one of the proteins that binds to the 5S RNA in the ribosome where it forms part of the central protuberance. The chain is Large ribosomal subunit protein bL25 from Micrococcus luteus (strain ATCC 4698 / DSM 20030 / JCM 1464 / CCM 169 / CCUG 5858 / IAM 1056 / NBRC 3333 / NCIMB 9278 / NCTC 2665 / VKM Ac-2230) (Micrococcus lysodeikticus).